A 445-amino-acid polypeptide reads, in one-letter code: MRALVLAAGKGTRMKSKIPKVLHPLSGKPMIEWVVETAGKVAQKVGVVLGFEAELVRKTLPEWVDVFVQEEQLGTAHAVMCAKDFIEPGDDVLILYGDVPLISENTLKRMIEEHRKGADVTILVADLEDPSGYGRVIQDGDKYRIIEDADLPEELKSVTTINTGFYVFSGDFLLRVLPEIKNENAKGEYYLTDAVNFAEKVRVVKTDDLLEITGVNTRKTLVWLEEQLRMRKIEELLENGVTILDPATTYIHYSVEIGMDTVIHPMTFIEGRTRVGENCEIGPMTRIVDCEIGNNVKITRSECFKSVIEDDVSVGPFARLREGTILKKSSKIGNFVEIKKSTIGEGTKAQHLSYIGDAFVGKNVNIGAGTITCNYDGKKKNPTFIEDGAFIGSNSSLVAPVRIGEGALIGAGSVITEDVPPYSLGLGRARQVVKEGWVLKKRKEE.

Residues 1 to 218 (MRALVLAAGK…LLEITGVNTR (218 aa)) form a pyrophosphorylase region. Residues 6–9 (LAAG), lysine 20, glutamine 69, 74–75 (GT), 96–98 (YGD), glycine 134, glutamate 147, asparagine 162, and asparagine 216 each bind UDP-N-acetyl-alpha-D-glucosamine. Mg(2+) is bound at residue aspartate 98. Residue asparagine 216 participates in Mg(2+) binding. A linker region spans residues 219–239 (KTLVWLEEQLRMRKIEELLEN). Positions 240-445 (GVTILDPATT…GWVLKKRKEE (206 aa)) are N-acetyltransferase. UDP-N-acetyl-alpha-D-glucosamine is bound by residues arginine 321 and lysine 339. Histidine 351 acts as the Proton acceptor in catalysis. Residues tyrosine 354 and asparagine 365 each coordinate UDP-N-acetyl-alpha-D-glucosamine. Residues alanine 368, 374 to 375 (NY), serine 393, alanine 411, and arginine 428 each bind acetyl-CoA.

The protein in the N-terminal section; belongs to the N-acetylglucosamine-1-phosphate uridyltransferase family. This sequence in the C-terminal section; belongs to the transferase hexapeptide repeat family. As to quaternary structure, homotrimer. The cofactor is Mg(2+).

Its subcellular location is the cytoplasm. It carries out the reaction alpha-D-glucosamine 1-phosphate + acetyl-CoA = N-acetyl-alpha-D-glucosamine 1-phosphate + CoA + H(+). The catalysed reaction is N-acetyl-alpha-D-glucosamine 1-phosphate + UTP + H(+) = UDP-N-acetyl-alpha-D-glucosamine + diphosphate. It functions in the pathway nucleotide-sugar biosynthesis; UDP-N-acetyl-alpha-D-glucosamine biosynthesis; N-acetyl-alpha-D-glucosamine 1-phosphate from alpha-D-glucosamine 6-phosphate (route II): step 2/2. It participates in nucleotide-sugar biosynthesis; UDP-N-acetyl-alpha-D-glucosamine biosynthesis; UDP-N-acetyl-alpha-D-glucosamine from N-acetyl-alpha-D-glucosamine 1-phosphate: step 1/1. Its pathway is bacterial outer membrane biogenesis; LPS lipid A biosynthesis. Functionally, catalyzes the last two sequential reactions in the de novo biosynthetic pathway for UDP-N-acetylglucosamine (UDP-GlcNAc). The C-terminal domain catalyzes the transfer of acetyl group from acetyl coenzyme A to glucosamine-1-phosphate (GlcN-1-P) to produce N-acetylglucosamine-1-phosphate (GlcNAc-1-P), which is converted into UDP-GlcNAc by the transfer of uridine 5-monophosphate (from uridine 5-triphosphate), a reaction catalyzed by the N-terminal domain. The protein is Bifunctional protein GlmU of Thermotoga petrophila (strain ATCC BAA-488 / DSM 13995 / JCM 10881 / RKU-1).